A 469-amino-acid chain; its full sequence is 3-isopropylmalate dehydratase large subunit (469 aa).

Residues C350, C410, and C413 each coordinate [4Fe-4S] cluster.

The protein belongs to the aconitase/IPM isomerase family. LeuC type 1 subfamily. As to quaternary structure, heterodimer of LeuC and LeuD. Requires [4Fe-4S] cluster as cofactor.

It carries out the reaction (2R,3S)-3-isopropylmalate = (2S)-2-isopropylmalate. The protein operates within amino-acid biosynthesis; L-leucine biosynthesis; L-leucine from 3-methyl-2-oxobutanoate: step 2/4. Its function is as follows. Catalyzes the isomerization between 2-isopropylmalate and 3-isopropylmalate, via the formation of 2-isopropylmaleate. The protein is 3-isopropylmalate dehydratase large subunit of Allorhizobium ampelinum (strain ATCC BAA-846 / DSM 112012 / S4) (Agrobacterium vitis (strain S4)).